A 151-amino-acid chain; its full sequence is UPF0756 membrane protein lhv_0995 (151 aa).

5 consecutive transmembrane segments (helical) span residues 4 to 24 (WLFLALVLVVALVGKNMSLII), 25 to 45 (ATGVVMALKLIPFASKWLPVI), 52 to 72 (WGVTVISVAILIPVATGQIGF), 78 to 98 (TFKSPAGWIAILAGIAVAILS), and 115 to 135 (LVLGTIIGVVVFKGVAAGPVI).

It belongs to the UPF0756 family.

It localises to the cell membrane. This chain is UPF0756 membrane protein lhv_0995, found in Lactobacillus helveticus (strain DPC 4571).